The following is a 77-amino-acid chain: U3-theraphotoxin-Hhn1k (77 aa).

Positions 1–14 are cleaved as a signal peptide; the sequence is TFAGLVLLFVVCYA. Positions 15 to 42 are excised as a propeptide; that stretch reads SESEEKEFPKEMLSSIFAVDNDFKQEER. 2 disulfides stabilise this stretch: C44–C57 and C56–C69.

The protein belongs to the neurotoxin 10 (Hwtx-1) family. 51 (Hntx-8) subfamily. Hntx-8 sub-subfamily. In terms of tissue distribution, expressed by the venom gland.

Its subcellular location is the secreted. Functionally, ion channel inhibitor. The chain is U3-theraphotoxin-Hhn1k from Cyriopagopus hainanus (Chinese bird spider).